The chain runs to 291 residues: Taste receptor type 2 member 16 (291 aa).

M1 is a topological domain (extracellular). The chain crosses the membrane as a helical span at residues 2 to 22; the sequence is IPIQLTVFFMIIYVLESLTII. Residues 23-41 lie on the Cytoplasmic side of the membrane; the sequence is VQSSLIVAVLGREWLQVRR. The helical transmembrane segment at 42–62 threads the bilayer; the sequence is LMPVDMILISLGISRFCLQWA. Residues 63-84 are Extracellular-facing; the sequence is SMLNBFCSYFNLNYVLCNLTIT. N-linked (GlcNAc...) asparagine glycosylation occurs at N80. Residues 85-105 traverse the membrane as a helical segment; it reads WEFFNILTFWLNSLLTVFYCI. Residues 106 to 125 are Cytoplasmic-facing; the sequence is KVSSFTHHIFLWLRWRILRL. A helical transmembrane segment spans residues 126–146; it reads FPWILLGSLMITCVTIIPSAI. The Extracellular segment spans residues 147–182; sequence GNYIQIQLLTMEHLPRNSTVTDKLEKFHQYEFQAHT. A glycan (N-linked (GlcNAc...) asparagine) is linked at N163. Residues 183-203 form a helical membrane-spanning segment; it reads VALVIPFILFLASTILLMASL. At 204–228 the chain is on the cytoplasmic side; that stretch reads TKQIQHHSTGHCNPSMKAHFTALRS. The helical transmembrane segment at 229 to 249 threads the bilayer; sequence LAVLFIVFTSYFLTILITIIG. At 250–257 the chain is on the extracellular side; that stretch reads TLFDRRCW. The chain crosses the membrane as a helical span at residues 258 to 278; that stretch reads LWVWEAFVYAFILMHSTSLML. Residues 279–291 lie on the Cytoplasmic side of the membrane; sequence SSPTLKRILKGKC.

This sequence belongs to the G-protein coupled receptor T2R family. Interacts with RTP3 and RTP4.

The protein localises to the cell membrane. Receptor that may play a role in the perception of bitterness and is gustducin-linked. May play a role in sensing the chemical composition of the gastrointestinal content. The activity of this receptor may stimulate alpha gustducin, mediate PLC-beta-2 activation and lead to the gating of TRPM5. The polypeptide is Taste receptor type 2 member 16 (TAS2R16) (Gorilla gorilla gorilla (Western lowland gorilla)).